We begin with the raw amino-acid sequence, 56 residues long: Putative 2-Cys peroxiredoxin BAS1 (56 aa).

The protein belongs to the peroxiredoxin family. AhpC/Prx1 subfamily. Homodimer; disulfide-linked, upon oxidation.

It localises to the plastid. The protein resides in the chloroplast. It catalyses the reaction a hydroperoxide + [thioredoxin]-dithiol = an alcohol + [thioredoxin]-disulfide + H2O. Thiol-specific peroxidase that catalyzes the reduction of hydrogen peroxide and organic hydroperoxides to water and alcohols, respectively. Plays a role in cell protection against oxidative stress by detoxifying peroxides. May be an antioxidant enzyme particularly in the developing shoot and photosynthesizing leaf. This Pinus strobus (Eastern white pine) protein is Putative 2-Cys peroxiredoxin BAS1.